The following is a 162-amino-acid chain: Class I hydrophobin 3 (162 aa).

2 disulfides stabilise this stretch: C36/C150 and C151/C159.

Belongs to the fungal hydrophobin family. As to quaternary structure, self-assembles to form functional amyloid fibrils called rodlets. Self-assembly into fibrillar rodlets occurs spontaneously at hydrophobic:hydrophilic interfaces and the rodlets further associate laterally to form amphipathic monolayers.

Its subcellular location is the secreted. It localises to the cell wall. Aerial growth, conidiation, and dispersal of filamentous fungi in the environment rely upon a capability of their secreting small amphipathic proteins called hydrophobins (HPBs) with low sequence identity. Class I can self-assemble into an outermost layer of rodlet bundles on aerial cell surfaces, conferring cellular hydrophobicity that supports fungal growth, development and dispersal; whereas Class II form highly ordered films at water-air interfaces through intermolecular interactions but contribute nothing to the rodlet structure. This is Class I hydrophobin 3 from Coprinopsis cinerea (strain Okayama-7 / 130 / ATCC MYA-4618 / FGSC 9003) (Inky cap fungus).